The primary structure comprises 104 residues: UPF0134 protein MPN_104 (104 aa).

It belongs to the UPF0134 family.

The polypeptide is UPF0134 protein MPN_104 (Mycoplasma pneumoniae (strain ATCC 29342 / M129 / Subtype 1) (Mycoplasmoides pneumoniae)).